Consider the following 216-residue polypeptide: Phosphatidylserine decarboxylase proenzyme (216 aa).

Residue Ser-185 is the Schiff-base intermediate with substrate; via pyruvic acid of the active site. Residue Ser-185 is modified to Pyruvic acid (Ser); by autocatalysis.

It belongs to the phosphatidylserine decarboxylase family. PSD-A subfamily. In terms of assembly, heterodimer of a large membrane-associated beta subunit and a small pyruvoyl-containing alpha subunit. Requires pyruvate as cofactor. Is synthesized initially as an inactive proenzyme. Formation of the active enzyme involves a self-maturation process in which the active site pyruvoyl group is generated from an internal serine residue via an autocatalytic post-translational modification. Two non-identical subunits are generated from the proenzyme in this reaction, and the pyruvate is formed at the N-terminus of the alpha chain, which is derived from the carboxyl end of the proenzyme. The post-translation cleavage follows an unusual pathway, termed non-hydrolytic serinolysis, in which the side chain hydroxyl group of the serine supplies its oxygen atom to form the C-terminus of the beta chain, while the remainder of the serine residue undergoes an oxidative deamination to produce ammonia and the pyruvoyl prosthetic group on the alpha chain.

It localises to the cell membrane. It catalyses the reaction a 1,2-diacyl-sn-glycero-3-phospho-L-serine + H(+) = a 1,2-diacyl-sn-glycero-3-phosphoethanolamine + CO2. It participates in phospholipid metabolism; phosphatidylethanolamine biosynthesis; phosphatidylethanolamine from CDP-diacylglycerol: step 2/2. In terms of biological role, catalyzes the formation of phosphatidylethanolamine (PtdEtn) from phosphatidylserine (PtdSer). The polypeptide is Phosphatidylserine decarboxylase proenzyme (Nitrosomonas europaea (strain ATCC 19718 / CIP 103999 / KCTC 2705 / NBRC 14298)).